Here is a 515-residue protein sequence, read N- to C-terminus: AAA ATPase forming ring-shaped complexes (515 aa).

Residues 2–49 (NDHDEETLASLQQANDQLMAKNHALVKALSRATQEMTKTKAQLNQLAG) adopt a coiled-coil conformation. 240–245 (GNGKTL) contacts ATP.

Belongs to the AAA ATPase family. Homohexamer. Assembles into a hexameric ring structure.

This chain is AAA ATPase forming ring-shaped complexes, found in Bifidobacterium adolescentis (strain ATCC 15703 / DSM 20083 / NCTC 11814 / E194a).